Here is a 739-residue protein sequence, read N- to C-terminus: UPF0313 protein YgiQ (739 aa).

The Radical SAM core domain maps to 372 to 650 (AYEMIRFSVN…KALLRYHDPA (279 aa)). C386, C390, and C393 together coordinate [4Fe-4S] cluster. The disordered stretch occupies residues 686–739 (EARRQNRNTRPALTKHTPMATQCQTPATAKKASSTQSRPVNAGAKKRPKAAVGR). Residues 704–724 (MATQCQTPATAKKASSTQSRP) are compositionally biased toward polar residues. The span at 729–739 (AKKRPKAAVGR) shows a compositional bias: basic residues.

This sequence belongs to the UPF0313 family. Requires [4Fe-4S] cluster as cofactor.

This chain is UPF0313 protein YgiQ, found in Escherichia coli O157:H7.